Consider the following 474-residue polypeptide: tRNA-2-methylthio-N(6)-dimethylallyladenosine synthase (474 aa).

An MTTase N-terminal domain is found at 3-120 (KKLHIKTWGC…LPDMIEQVRR (118 aa)). [4Fe-4S] cluster-binding residues include cysteine 12, cysteine 49, cysteine 83, cysteine 157, cysteine 161, and cysteine 164. The 233-residue stretch at 143 to 375 (RAEGPTAFVS…QDRITQQAMR (233 aa)) folds into the Radical SAM core domain. The TRAM domain maps to 378–441 (RHMMGTVQRI…TNSLRGKFIR (64 aa)).

Belongs to the methylthiotransferase family. MiaB subfamily. Monomer. [4Fe-4S] cluster is required as a cofactor.

It localises to the cytoplasm. It catalyses the reaction N(6)-dimethylallyladenosine(37) in tRNA + (sulfur carrier)-SH + AH2 + 2 S-adenosyl-L-methionine = 2-methylsulfanyl-N(6)-dimethylallyladenosine(37) in tRNA + (sulfur carrier)-H + 5'-deoxyadenosine + L-methionine + A + S-adenosyl-L-homocysteine + 2 H(+). Catalyzes the methylthiolation of N6-(dimethylallyl)adenosine (i(6)A), leading to the formation of 2-methylthio-N6-(dimethylallyl)adenosine (ms(2)i(6)A) at position 37 in tRNAs that read codons beginning with uridine. This chain is tRNA-2-methylthio-N(6)-dimethylallyladenosine synthase, found in Shewanella sp. (strain MR-7).